The chain runs to 225 residues: NAD(P)H-quinone oxidoreductase subunit K, chloroplastic (225 aa).

Residues C43, C44, C108, and C139 each coordinate [4Fe-4S] cluster.

It belongs to the complex I 20 kDa subunit family. In terms of assembly, NDH is composed of at least 16 different subunits, 5 of which are encoded in the nucleus. It depends on [4Fe-4S] cluster as a cofactor.

It localises to the plastid. Its subcellular location is the chloroplast thylakoid membrane. It catalyses the reaction a plastoquinone + NADH + (n+1) H(+)(in) = a plastoquinol + NAD(+) + n H(+)(out). The enzyme catalyses a plastoquinone + NADPH + (n+1) H(+)(in) = a plastoquinol + NADP(+) + n H(+)(out). In terms of biological role, NDH shuttles electrons from NAD(P)H:plastoquinone, via FMN and iron-sulfur (Fe-S) centers, to quinones in the photosynthetic chain and possibly in a chloroplast respiratory chain. The immediate electron acceptor for the enzyme in this species is believed to be plastoquinone. Couples the redox reaction to proton translocation, and thus conserves the redox energy in a proton gradient. This chain is NAD(P)H-quinone oxidoreductase subunit K, chloroplastic, found in Crucihimalaya wallichii (Rock-cress).